A 90-amino-acid polypeptide reads, in one-letter code: Phaiodotoxin (90 aa).

The signal sequence occupies residues 1 to 18 (MKTIPLLFLLFIYFECDG). The LCN-type CS-alpha/beta domain maps to 19–90 (KFIRHKDESF…CFGALESKCA (72 aa)). Intrachain disulfides connect cysteine 31/cysteine 56, cysteine 41/cysteine 68, cysteine 45/cysteine 70, and cysteine 81/cysteine 89.

Expressed by the venom gland.

The protein resides in the secreted. Sodium channel (Nav) specific neurotoxin. Causes impairment of movement and mild paralysis in crickets at a dose of 0.5 ug per animal. A dose of 0.8 ug per cricket causes clear flaccid paralysis. A dose of 1.0 ug per cricket causes death within 2 hours. Is not toxic to mice at a dose of 100 ug per 20 g mouse weight. This chain is Phaiodotoxin, found in Anuroctonus phaiodactylus (Mafia scorpion).